The following is a 569-amino-acid chain: Proline--tRNA ligase (569 aa).

Belongs to the class-II aminoacyl-tRNA synthetase family. ProS type 1 subfamily. In terms of assembly, homodimer.

It localises to the cytoplasm. The enzyme catalyses tRNA(Pro) + L-proline + ATP = L-prolyl-tRNA(Pro) + AMP + diphosphate. Catalyzes the attachment of proline to tRNA(Pro) in a two-step reaction: proline is first activated by ATP to form Pro-AMP and then transferred to the acceptor end of tRNA(Pro). As ProRS can inadvertently accommodate and process non-cognate amino acids such as alanine and cysteine, to avoid such errors it has two additional distinct editing activities against alanine. One activity is designated as 'pretransfer' editing and involves the tRNA(Pro)-independent hydrolysis of activated Ala-AMP. The other activity is designated 'posttransfer' editing and involves deacylation of mischarged Ala-tRNA(Pro). The misacylated Cys-tRNA(Pro) is not edited by ProRS. In Desulforamulus reducens (strain ATCC BAA-1160 / DSM 100696 / MI-1) (Desulfotomaculum reducens), this protein is Proline--tRNA ligase.